Consider the following 66-residue polypeptide: UPF0337 protein BT9727_0908 (66 aa).

The interval 1 to 22 (MSENGLKEQITGKVEKTKGQVK) is disordered. Over residues 13 to 22 (KVEKTKGQVK) the composition is skewed to basic and acidic residues.

Belongs to the UPF0337 (CsbD) family.

This Bacillus thuringiensis subsp. konkukian (strain 97-27) protein is UPF0337 protein BT9727_0908.